A 265-amino-acid polypeptide reads, in one-letter code: UPF0354 protein GTNG_2723 (265 aa).

Belongs to the UPF0354 family.

This is UPF0354 protein GTNG_2723 from Geobacillus thermodenitrificans (strain NG80-2).